The sequence spans 508 residues: General transcription factor IIF subunit 1 (508 aa).

Residue alanine 2 is modified to N-acetylalanine. Residue threonine 156 is modified to Phosphothreonine. A disordered region spans residues 177 to 446 (MQQRRLKDQD…TPSSGDVQVT (270 aa)). 4 positions are modified to phosphoserine: serine 217, serine 218, serine 221, and serine 224. The segment covering 232 to 251 (SKAKKKAPVTKAGRKKKKKK) has biased composition (basic residues). 2 stretches are compositionally biased toward acidic residues: residues 255 to 270 (DEAF…EGQE) and 303 to 325 (EQSE…EEEE). Threonine 331 is subject to Phosphothreonine. Over residues 343-355 (DDSDSSEESDIDS) the composition is skewed to acidic residues. A compositionally biased stretch (basic residues) spans 364–374 (AKKKTPPKRER). Phosphoserine occurs at positions 377, 380, 381, and 385. The span at 378 to 388 (GGSSKGTSRPG) shows a compositional bias: polar residues. Threonine 389 carries the phosphothreonine modification. Over residues 389 to 406 (TPSAEAASTSSTLRAAAS) the composition is skewed to low complexity. Phosphoserine is present on serine 391. Lysine 407 carries the post-translational modification N6-acetyllysine. Positions 428–443 (GPQSLSGKSTPSSGDV) are enriched in polar residues. 3 positions are modified to phosphoserine: serine 431, serine 433, and serine 436. Phosphothreonine is present on threonine 437. Serine 440 carries the phosphoserine modification.

Belongs to the TFIIF alpha subunit family. In terms of assembly, heterodimer of an alpha and a beta subunit. Interacts with GTF2F2, CTDP1, TAF6/TAFII80 and URI1. Interacts with GTF2B (via C-terminus and preferentially via acetylated form); this interaction prevents binding of GTF2B to GTF2F2. Part of TBP-based Pol II pre-initiation complex (PIC), in which Pol II core assembles with general transcription factors and other specific initiation factors including GTF2E1, GTF2E2, GTF2F1, GTF2F2, TCEA1, ERCC2, ERCC3, GTF2H2, GTF2H3, GTF2H4, GTF2H5, GTF2A1, GTF2A2, GTF2B and TBP; this large multi-subunit PIC complex mediates DNA unwinding and targets Pol II core to the transcription start site where the first phosphodiester bond forms. In terms of processing, phosphorylated on Ser and other residues by TAF1 and casein kinase II-like kinases.

It localises to the nucleus. TFIIF is a general transcription initiation factor that binds to RNA polymerase II and helps to recruit it to the initiation complex in collaboration with TFIIB. It promotes transcription elongation. In Mus musculus (Mouse), this protein is General transcription factor IIF subunit 1 (Gtf2f1).